A 46-amino-acid chain; its full sequence is Thymosin beta-a (46 aa).

Positions 21-30 (TNTAEKNTLP) are enriched in polar residues. A disordered region spans residues 21–46 (TNTAEKNTLPTKEDIDQEKKAAEGGK). Basic and acidic residues predominate over residues 31-46 (TKEDIDQEKKAAEGGK).

The protein belongs to the thymosin beta family.

It localises to the cytoplasm. The protein localises to the cytoskeleton. Plays an important role in the organization of the cytoskeleton. Binds to and sequesters actin monomers (G actin) and therefore inhibits actin polymerization. This is Thymosin beta-a from Cyprinus carpio (Common carp).